The sequence spans 320 residues: Cytochrome f (320 aa).

The first 35 residues, 1-35, serve as a signal peptide directing secretion; that stretch reads MQTRNAFSWLKKQITRSISVSLMIYILTRTSISSA. Residues Y36, C56, C59, and H60 each coordinate heme. Residues 286 to 305 form a helical membrane-spanning segment; the sequence is VQGLLFFLASVILAQIFLVL.

The protein belongs to the cytochrome f family. The 4 large subunits of the cytochrome b6-f complex are cytochrome b6, subunit IV (17 kDa polypeptide, petD), cytochrome f and the Rieske protein, while the 4 small subunits are PetG, PetL, PetM and PetN. The complex functions as a dimer. It depends on heme as a cofactor.

Its subcellular location is the plastid. It localises to the chloroplast thylakoid membrane. In terms of biological role, component of the cytochrome b6-f complex, which mediates electron transfer between photosystem II (PSII) and photosystem I (PSI), cyclic electron flow around PSI, and state transitions. In Atropa belladonna (Belladonna), this protein is Cytochrome f.